A 349-amino-acid chain; its full sequence is tRNA pseudouridine synthase D (349 aa).

Substrate is bound at residue F26. Catalysis depends on D79, which acts as the Nucleophile. N128 is a substrate binding site. In terms of domain architecture, TRUD spans 154–302; that stretch reads GVPNYFGEQR…VEGCRRAILV (149 aa). Residue F328 participates in substrate binding.

Belongs to the pseudouridine synthase TruD family.

The catalysed reaction is uridine(13) in tRNA = pseudouridine(13) in tRNA. In terms of biological role, responsible for synthesis of pseudouridine from uracil-13 in transfer RNAs. The chain is tRNA pseudouridine synthase D from Photorhabdus laumondii subsp. laumondii (strain DSM 15139 / CIP 105565 / TT01) (Photorhabdus luminescens subsp. laumondii).